A 22-amino-acid polypeptide reads, in one-letter code: Peroxidase 5 (22 aa).

Belongs to the peroxidase family. Classical plant (class III) peroxidase subfamily. Requires heme b as cofactor. Ca(2+) serves as cofactor.

It localises to the secreted. The protein localises to the cell wall. It carries out the reaction 2 a phenolic donor + H2O2 = 2 a phenolic radical donor + 2 H2O. Functionally, removal of H(2)O(2), oxidation of toxic reductants, biosynthesis and degradation of lignin, suberization, auxin catabolism, response to environmental stresses such as wounding, pathogen attack and oxidative stress. These functions might be dependent on each isozyme/isoform in each plant tissue. The sequence is that of Peroxidase 5 from Cycas revoluta (Sago palm).